Consider the following 473-residue polypeptide: MKTLYSLRRSYPVETLFNGTIALAGRDQETTGFAWWAGNARLINLSGKLLGAHVAHAGLIVFWAGAMNLFEVAHFVPEKPMYEQGLILLPHLATLGWGVGPGGEIVDTFPYFVSGVLHLISSAVLGFGGIYHALIGPETLEESFPFFGYVWKDRNKMTTILGIHLILLGAGAFLLVLKALYFGGVYDTWAPGGGDVRKITNPTLNPSAIFGYLLKSPFGGEGWIVSVDNLEDIIGGHVWLGSICIFGGIWHILTKPFAWARRAFVWSGEAYLSYSLAALSLFGFIACCFVWFNNTAYPSEFYGPTGPEASQAQAFTFLVRDQRLGASVGSAQGPTGLGKYLMRSPTGEIIFGGETMRFWDLRAPWLEPLRGPNGLDLSKLRKDIQPWQERRSAEYMTHAPLGSSNSVGGVATEINAVNYVSPRSWLSTSHFVLGFFLFIGHLWHAGRARAAAAGFEKGIDRDFEPVLSMTPLN.

The propeptide occupies 1–14 (MKTLYSLRRSYPVE). At Thr15 the chain carries N-acetylthreonine. Thr15 is subject to Phosphothreonine. Transmembrane regions (helical) follow at residues 69-93 (LFEVAHFVPEKPMYEQGLILLPHLA), 134-155 (LIGPETLEESFPFFGYVWKDRN), 178-200 (KALYFGGVYDTWAPGGGDVRKIT), 255-275 (KPFAWARRAFVWSGEAYLSYS), and 291-312 (WFNNTAYPSEFYGPTGPEASQA). Residue Glu367 coordinates [CaMn4O5] cluster. Residues 447 to 471 (RARAAAAGFEKGIDRDFEPVLSMTP) traverse the membrane as a helical segment.

The protein belongs to the PsbB/PsbC family. PsbC subfamily. As to quaternary structure, PSII is composed of 1 copy each of membrane proteins PsbA, PsbB, PsbC, PsbD, PsbE, PsbF, PsbH, PsbI, PsbJ, PsbK, PsbL, PsbM, PsbT, PsbX, PsbY, PsbZ, Psb30/Ycf12, at least 3 peripheral proteins of the oxygen-evolving complex and a large number of cofactors. It forms dimeric complexes. Binds multiple chlorophylls and provides some of the ligands for the Ca-4Mn-5O cluster of the oxygen-evolving complex. It may also provide a ligand for a Cl- that is required for oxygen evolution. PSII binds additional chlorophylls, carotenoids and specific lipids. is required as a cofactor.

Its subcellular location is the plastid. The protein resides in the chloroplast thylakoid membrane. Functionally, one of the components of the core complex of photosystem II (PSII). It binds chlorophyll and helps catalyze the primary light-induced photochemical processes of PSII. PSII is a light-driven water:plastoquinone oxidoreductase, using light energy to abstract electrons from H(2)O, generating O(2) and a proton gradient subsequently used for ATP formation. This is Photosystem II CP43 reaction center protein from Abies alba (Edeltanne).